An 841-amino-acid polypeptide reads, in one-letter code: Serine/threonine-protein kinase/endoribonuclease IRE1a (841 aa).

A signal peptide spans 1 to 30 (MPPRCPFLRHLFFLLLLLSPWIMSPCGGAA). The Lumenal segment spans residues 31-323 (DDVTYPIVPS…KQKYTYLFGQ (293 aa)). N-linked (GlcNAc...) asparagine glycosylation is found at Asn-100, Asn-104, Asn-119, Asn-132, and Asn-221. Residues 324 to 344 (WSPVKLLAPLVLLGVVVSVFI) traverse the membrane as a helical segment. The Cytoplasmic segment spans residues 345–841 (KKFSSRGSDV…FRKYFKCDII (497 aa)). The tract at residues 352 to 382 (SDVSLKAGPSKKKKNRKSAKDTNRQSVPRGQ) is disordered. A Protein kinase domain is found at 414-704 (FLSSKEIAKG…ATEVLLHPMF (291 aa)). ATP contacts are provided by residues 420-428 (IAKGSNGTV) and Lys-442. The active-site Proton acceptor is the Asp-570. In terms of domain architecture, KEN spans 707–838 (SEMRLSFLRD…EEVFRKYFKC (132 aa)).

It belongs to the protein kinase superfamily. Ser/Thr protein kinase family. Homodimer; disulfide-linked. Dimer formation is driven by hydrophobic interactions within the N-terminal luminal domains and stabilized by disulfide bridges. The cofactor is Mg(2+). Post-translationally, autophosphorylated. In terms of tissue distribution, ubiquitous. Detected in the vascular bundles of young plants, leaves, roots, seedlings and in the receptacles of flowers and vascular bundles of the petals.

It is found in the endoplasmic reticulum membrane. The catalysed reaction is L-seryl-[protein] + ATP = O-phospho-L-seryl-[protein] + ADP + H(+). It carries out the reaction L-threonyl-[protein] + ATP = O-phospho-L-threonyl-[protein] + ADP + H(+). The kinase domain is activated by trans-autophosphorylation. Kinase activity is required for activation of the endoribonuclease domain. In terms of biological role, senses unfolded proteins in the lumen of the endoplasmic reticulum via its N-terminal domain which leads to enzyme auto-activation. The active endoribonuclease domain splices bZIP60 mRNA to generate a new C-terminus, converting it into a potent unfolded-protein response transcriptional activator which then induces transcription of UPR target genes. Involved in organ growth regulation. Plays a role in plant immunity and abiotic stress responses. This chain is Serine/threonine-protein kinase/endoribonuclease IRE1a (IRE1A), found in Arabidopsis thaliana (Mouse-ear cress).